We begin with the raw amino-acid sequence, 331 residues long: Cytosolic 5'-nucleotidase 3A (331 aa).

Asp83 functions as the Nucleophile in the catalytic mechanism. Positions 83 and 85 each coordinate Mg(2+). The active-site Proton donor is Asp85. Glu130 is a CMP binding site. 2 residues coordinate N(7)-methyl-GMP: Glu130 and Ser151. Substrate contacts are provided by residues 198–200 (SAG) and Lys247. Mg(2+) is bound at residue Asp272. Position 273 is a phosphoserine (Ser273).

It belongs to the pyrimidine 5'-nucleotidase family. Monomer. As to expression, isoform 2 is highly expressed in the brain, heart, spleen, kidney and blood. Isoform 2 is expressed (at protein level) in the spleen, skeletal muscle and gastrointestinal epithelia.

It localises to the cytoplasm. The catalysed reaction is N(7)-methyl-GMP + H2O = N(7)-methylguanosine + phosphate. The enzyme catalyses a ribonucleoside 5'-phosphate + H2O = a ribonucleoside + phosphate. Nucleotidase which shows specific activity towards cytidine monophosphate (CMP) and 7-methylguanosine monophosphate (m(7)GMP). CMP seems to be the preferred substrate. The polypeptide is Cytosolic 5'-nucleotidase 3A (Nt5c3a) (Mus musculus (Mouse)).